The chain runs to 555 residues: MELERTTIARMLFDRLGDDRLGVRTREQDWTWDEVVRESAARGAVASSLRRDGPFHVGVLLENTPEFLFWLGGAALAGAAVVGVNPTRRGAELEAEIRYVDCQLIVTDTAGKAQLAGLDLGLSEDRFLLVDDPAYTELVAAHAVESPAEDPGIDASTLFLLLFTSGTTGTSKAVRCSQGRLARLAYANTAKYGHVREDVDYCCMPLFHGNALMALWAPALANGATVCLPRKFSASGFLPDVRFFGATFFTYVGKALAYLMATPEQPDDRDNTLVRGFGTEASPEDKTEFVRRFGAELYEGYGSSEGAGSVTLDPDAPEGALGRPANENIVIVDPDTRVEKARARLDEHGRVLNPDEAIGEMVDKAGASRFEGYYKNEDAIADRIRHGWYWTGDLGYVDEAGFIYFAGRKGDWIRVDGENTSALMVERILRRHPKVVATGVFAVPDPRSGDQVMAAVEVADPTDFDPAEFAAFLGNQDDLGTKAAPRFVRVSRDLPVTGSNKVLKRTLQEQRWRCDDPVFRWVGRGVPEYHEMTDSEKAVLEQEFHTHGRQRFLHV.

This sequence belongs to the ATP-dependent AMP-binding enzyme family.

It catalyses the reaction 3-oxochol-4-en-22-oate + ATP + CoA = 3-oxochol-4-en-22-oyl-CoA + AMP + diphosphate. The enzyme catalyses 3-hydroxy-9-oxo-9,10-seco-chola-1,3,5-trien-22-oate + ATP + CoA = 3-hydroxy-9-oxo-9,10-seco-chola-1,3,5-trien-22-oyl-CoA + AMP + diphosphate. It participates in steroid metabolism. Involved in cholate catabolism. Catalyzes the ATP-dependent formation of CoA thioesters of steroids with isopropanoyl side chains, likely occurring as degradation intermediates. Can use 4-BNC, HSBNC and HIDP as substrate. This chain is Steroid-22-oyl-CoA synthetase, found in Rhodococcus jostii (strain RHA1).